We begin with the raw amino-acid sequence, 322 residues long: MKNGSGNTNTKLILLHPYIQKQTSTTRLWLLAFVSFFTIVFLLTLLYTRDTIPSKNTSVAAAVAAVVTGGSTPSASSPISNSNLPTSAINALLHYASRSNDSFHMSYGEMKSISDVLRRCAPPCNLLVFGLTHETLLWKSLNHNGRTVFIEENRYYAAYFEEIHPEIDVFDVQYTTKAHEAGELVTAAKEAAGNECRPVQNLLFSDCKLGLNDLPNHVYDVDWDVIFVDGPRGDAHEGPGRMSSIFTAAVLARSKKGGTPKTHVFVHDYYRDVERLCGDEFLCRENLVESNDLLAHYVLDKMDKNSTKFCNGRKKRSVSSLS.

The helical transmembrane segment at 28–48 (LWLLAFVSFFTIVFLLTLLYT) threads the bilayer.

Expressed in rosette leaves, stems and siliques. Expressed in the xylem.

It is found in the golgi apparatus membrane. Functionally, required for xylan biosynthesis, but not directly involved in catalyzing the addition of sugars to the growing polymer. The polypeptide is Protein IRREGULAR XYLEM 15 (IRX15) (Arabidopsis thaliana (Mouse-ear cress)).